A 472-amino-acid chain; its full sequence is Phosphoenolpyruvate carboxykinase (ATP), glycosomal (472 aa).

Residue 221–228 coordinates ATP; the sequence is GLSGTGKT.

Belongs to the phosphoenolpyruvate carboxykinase (ATP) family. In terms of assembly, homodimer.

It localises to the glycosome. The catalysed reaction is oxaloacetate + ATP = phosphoenolpyruvate + ADP + CO2. It participates in carbohydrate biosynthesis; gluconeogenesis. In terms of biological role, P60 has the capability to bind to microtubules and membrane vesicles in vitro. This Trypanosoma brucei brucei protein is Phosphoenolpyruvate carboxykinase (ATP), glycosomal.